A 382-amino-acid polypeptide reads, in one-letter code: Ustilagic acid biosynthesis cluster protein orf2 (382 aa).

Over residues 1-20 (MLQEAKVSTHTSNPLSQSVP) the composition is skewed to polar residues. The tract at residues 1–22 (MLQEAKVSTHTSNPLSQSVPQY) is disordered.

The protein operates within secondary metabolite biosynthesis. Its function is as follows. Part of the gene cluster that mediates the biosynthesis of the glycolipid biosurfactant ustilagic acid (UA). UA is a secreted cellobiose glycolipid that is toxic for many microorganisms and confers biocontrol activity to U.maydis. UA consists of 15,16-dihydroxypalmitic or 2,15,16-trihydroxypalmitic acid, which is O-glycosidically linked to cellobiose at its terminal hydroxyl group. In addition, the cellobiose moiety is acetylated and acylated with a short-chain hydroxy fatty acid. UA biosynthesis starts with omega-hydroxylation of palmitic acid catalyzed by the cytochrome P450 monooxygenase cyp1. Terminal hydroxylation of palmitic acid precedes subterminal hydroxylation catalyzed by the cytochrome P450 monooxygenase cyp2. Sequential glucosylation of the hydroxy fatty acid is probably catalyzed by the glycosyltransferase ugt1. The cellobiose lipid is further decorated by acetylation of the proximal glucose residue and by acylation with a short-chain beta-hydroxy fatty acid at the distal glucose residue. The acyltransferase uat1 may be a good candidate for catalyzing either acetylation or acylation of the cellobiose lipid. The fatty acid synthase fas2 may be involved in synthesis of the carbon backbone of the short-chain beta-hydroxy fatty acid esterified to the cellobiose disaccharide. The secreted UA consists of a mixture of both alpha-hydroxylated and non-hydroxylated glycolipids; therefore, alpha-hydroxylation of the long-chain fatty, catalyzed by the fatty acid hydroxylase ahd1, occurs late in UA biosynthesis and may be the last step before secretion. This is Ustilagic acid biosynthesis cluster protein orf2 from Mycosarcoma maydis (Corn smut fungus).